The sequence spans 368 residues: WD repeat-containing protein 53 homolog (368 aa).

WD repeat units lie at residues 27-66 (GHKD…SIQS), 71-108 (FQGN…VILK), 116-155 (FNTE…LVES), 159-199 (KHTN…VLHR), 228-267 (LNPP…QYLK), and 271-315 (IHKS…NTKV). The tract at residues 207 to 231 (LPQNISKSQQQQQETTEPNRMLNPP) is disordered.

Belongs to the WD repeat WDR53 family.

The chain is WD repeat-containing protein 53 homolog (wdr53) from Dictyostelium discoideum (Social amoeba).